The sequence spans 463 residues: Sodium-coupled neutral amino acid transporter 7 (463 aa).

Ser28 carries the post-translational modification Phosphoserine. Helical transmembrane passes span 56-76 (AIFIVVNACLGAGLLNFPAAF), 82-102 (VAAGITLQMAMLVFIISGLVI), 130-150 (LCEVAIATYTFGTCIAFLIII), 179-199 (FTISLTAFLFILPLSIPREIG), 206-226 (FLSVVGTWYVTAIIIIKYIWP), 240-260 (ASWIAVFNAMPTICFGFQCHV), 283-303 (AAMVIALAVYMGTGICGFLTF), 320-340 (MAVAVARAFIILSVLTSYPIL), 372-392 (VLQTLVWFLLTLLLALFIPDI), 396-416 (ISVIGGLAACFIFVFPGLCLI), and 429-449 (ASWWAMVSYGVLLVTLGAFIF).

It belongs to the amino acid/polyamine transporter 2 family. In terms of assembly, interacts with the mTORC1 complex; this interaction mediates the recruitment of mTORC1 to the lysosome and its subsequent activation.

The protein localises to the lysosome membrane. It localises to the cell projection. Its subcellular location is the axon. It carries out the reaction L-asparagine(in) + Na(+)(in) = L-asparagine(out) + Na(+)(out). The enzyme catalyses L-glutamine(in) + Na(+)(in) = L-glutamine(out) + Na(+)(out). Its function is as follows. Symporter that selectively cotransports sodium ions and amino acids, such as L-glutamine and L-asparagine from the lysosome into the cytoplasm and may participates in mTORC1 activation. The transport activity requires an acidic lysosomal lumen. The sequence is that of Sodium-coupled neutral amino acid transporter 7 from Bos taurus (Bovine).